The following is an 83-amino-acid chain: Small ribosomal subunit protein uS17 (83 aa).

It belongs to the universal ribosomal protein uS17 family. In terms of assembly, part of the 30S ribosomal subunit.

Functionally, one of the primary rRNA binding proteins, it binds specifically to the 5'-end of 16S ribosomal RNA. In Synechococcus sp. (strain RCC307), this protein is Small ribosomal subunit protein uS17.